A 63-amino-acid polypeptide reads, in one-letter code: Large ribosomal subunit protein eL37 (63 aa).

Zn(2+) is bound by residues cysteine 20, cysteine 23, cysteine 35, and cysteine 38. Residues 20–38 (CRRCGHHSFNVRKGYCAHC) form a C4-type zinc finger.

The protein belongs to the eukaryotic ribosomal protein eL37 family. Requires Zn(2+) as cofactor.

Functionally, binds to the 23S rRNA. This is Large ribosomal subunit protein eL37 from Thermofilum pendens (strain DSM 2475 / Hrk 5).